The following is a 261-amino-acid chain: Hemin import ATP-binding protein HmuV (261 aa).

The ABC transporter domain maps to 3–239; sequence LDAADITVKL…AILSQAYGCA (237 aa). 35 to 42 provides a ligand contact to ATP; it reads GPNGSGKT.

Belongs to the ABC transporter superfamily. Heme (hemin) importer (TC 3.A.1.14.5) family. As to quaternary structure, the complex is composed of two ATP-binding proteins (HmuV), two transmembrane proteins (HmuU) and a solute-binding protein (HmuT).

The protein resides in the cell inner membrane. Part of the ABC transporter complex HmuTUV involved in hemin import. Responsible for energy coupling to the transport system. The sequence is that of Hemin import ATP-binding protein HmuV from Roseobacter denitrificans (strain ATCC 33942 / OCh 114) (Erythrobacter sp. (strain OCh 114)).